A 253-amino-acid polypeptide reads, in one-letter code: 5-oxoprolinase subunit A (253 aa).

The protein belongs to the LamB/PxpA family. Forms a complex composed of PxpA, PxpB and PxpC.

The catalysed reaction is 5-oxo-L-proline + ATP + 2 H2O = L-glutamate + ADP + phosphate + H(+). In terms of biological role, catalyzes the cleavage of 5-oxoproline to form L-glutamate coupled to the hydrolysis of ATP to ADP and inorganic phosphate. This is 5-oxoprolinase subunit A from Bacillus licheniformis (strain ATCC 14580 / DSM 13 / JCM 2505 / CCUG 7422 / NBRC 12200 / NCIMB 9375 / NCTC 10341 / NRRL NRS-1264 / Gibson 46).